Reading from the N-terminus, the 846-residue chain is Homeodomain-interacting protein kinase 1 (846 aa).

The segment at 47–74 is disordered; sequence NPFSIQKAPGTSSDNEQRAPKRRADEEA. Positions 61 to 72 are enriched in basic and acidic residues; the sequence is NEQRAPKRRADE. The Protein kinase domain occupies 147–483; the sequence is YEVLEFLGKG…PAEGLESKFV (337 aa). ATP is bound by residues 153-161 and K176; that span reads LGKGTFGQV. The Proton acceptor role is filled by D272. The disordered stretch occupies residues 741–790; it reads LAAQPKKNSPAPSVITLSSDEDSNGAGSSNSGSTTRTGAVNPVRNDTLPM. A compositionally biased stretch (polar residues) spans 746–757; sequence KKNSPAPSVITL. Residues 764–773 show a composition bias toward low complexity; it reads NGAGSSNSGS.

It belongs to the protein kinase superfamily. CMGC Ser/Thr protein kinase family. HIPK subfamily. In terms of tissue distribution, broadly expressed during embryogenesis. Expression becomes more restricted during larval development. L3 larvae display robust expression in many head and motor neurons, and lower levels of expression in the intestine and the seam cells of the hypodermis. By late L4 stage, expression is largely restricted to neurons and is maintained in nerve cells of the head and nerve cord during adulthood. Expressed in adult pharyngeal cells, hypodermal cells, gonadal sheath cells and distal tip cells but not in germline cells. Expressed in serotonergic neurons such as ADF and NSM and in GABAergic neurons, including RME, RIS and DVB.

Its subcellular location is the nucleus. The catalysed reaction is L-seryl-[protein] + ATP = O-phospho-L-seryl-[protein] + ADP + H(+). It carries out the reaction L-threonyl-[protein] + ATP = O-phospho-L-threonyl-[protein] + ADP + H(+). In terms of biological role, serine/threonine-protein kinase required in the somatic gonadal cells to regulate germline proliferation during larval development and in adulthood. Plays a role in the development/differentiation of gonadal distal tip cells. Required for normal lifespan in a pha-4 and mxl-2-dependent manner. Also contributes to survival following heat or oxidative stress. Prevents sumoylation and inactivation of heat shock transcription factor hsf-1 which enhances hsf-1-dependent transcriptional induction of chaperones in response to heat shock. Also required for hormetic extension of longevity in response to heat stress. Also contributes to longevity by promoting autophagy under nutrient stress conditions through induction of autophagosome formation and autophagy gene expression. Provides protection against proteotoxic polyglutamine aggregate and the associated locomotory toxicity, probably as a result of kinase activity. Contributes to longevity via gamma-aminobutyric acid (GABA)ergic signaling by promoting autophagy through mxl-2, hlh-30 and daf-16 but independent of hsf-1 and phas-4, to induce autophagosome formation and the expression of autophagy genes. Promotes thermotolerance via serotonergic signaling by serotonergic neurons. Preserves neuronal function in aging animals by mitigating against age-associated decline in axonal and synaptic transmissions. Acts as an activator of nhr-49-dependent hypoxia response, including the up-regulation of fmo-2 and acs-2, the induction of autophagosome formation and expression of autophagy genes. The sequence is that of Homeodomain-interacting protein kinase 1 from Caenorhabditis elegans.